A 663-amino-acid chain; its full sequence is Beta-galactosidase YesZ (663 aa).

Substrate is bound at residue R107. C111 provides a ligand contact to Zn(2+). N145 is a substrate binding site. E146 acts as the Proton donor in catalysis. C154, C156, and C159 together coordinate Zn(2+). The active-site Nucleophile is the E297. 346-349 contributes to the substrate binding site; it reads EQPH.

This sequence belongs to the glycosyl hydrolase 42 family. Homotrimer.

It catalyses the reaction Hydrolysis of terminal non-reducing beta-D-galactose residues in beta-D-galactosides.. May play a role in the degradation of rhamnogalacturonan derived from plant cell walls. This chain is Beta-galactosidase YesZ (yesZ), found in Bacillus licheniformis (strain ATCC 14580 / DSM 13 / JCM 2505 / CCUG 7422 / NBRC 12200 / NCIMB 9375 / NCTC 10341 / NRRL NRS-1264 / Gibson 46).